We begin with the raw amino-acid sequence, 818 residues long: Rho GTPase-activating protein 44 (818 aa).

Residues 14–249 (QTVGRAEKTE…IKAQQEAWVE (236 aa)) form the BAR domain. The Rho-GAP domain occupies 255 to 445 (KPLEEHLTIS…PIIQHADWFF (191 aa)). Disordered regions lie at residues 467-493 (ANYSSMPSPDMDPADRRQPEQARRPLS), 530-772 (SSAG…SMST), and 789-818 (TLRLSPLEHMRRHSVTDKRDSEEESESTAL). Positions 479–489 (PADRRQPEQAR) are enriched in basic and acidic residues. Position 493 is a phosphoserine (serine 493). Residues 563–579 (QPLDSPAAPALSPSGLG) are compositionally biased toward low complexity. Residues 598–611 (GSAQKGSPGSSQGT) are compositionally biased toward polar residues. Composition is skewed to low complexity over residues 614 to 641 (AGTQPGAQPGAQPGASPSPSQPPADQSP) and 688 to 708 (SPYGLSYPQGYSLASGQLSPA). Residues 731–818 (KPRQRPTLPP…SEEESESTAL (88 aa)) are interaction with BST2. A compositionally biased stretch (polar residues) spans 746 to 757 (VNLSASSPQSTE). The PDZ-binding signature appears at 764–767 (MSPG). Basic and acidic residues predominate over residues 794 to 809 (PLEHMRRHSVTDKRDS). A Phosphoserine modification is found at serine 809. The short motif at 815–818 (STAL) is the PDZ-binding element.

Interacts with BST2 (via cytoplasmic domain). Interacts (probably via PDZ-binding motif) with SHANK3 (via PDZ domain); the interaction takes place in dendritic spines and promotes GRIA1 exocytosis. Highly expressed in brain. Expressed at weak level in other tissues.

It localises to the cell projection. The protein resides in the dendritic spine. It is found in the recycling endosome. Its subcellular location is the presynapse. The protein localises to the dendrite. Its function is as follows. GTPase-activating protein (GAP) that stimulates the GTPase activity of Rho-type GTPases. Thereby, controls Rho-type GTPases cycling between their active GTP-bound and inactive GDP-bound states. Acts as a GAP at least for CDC42 and RAC1. In neurons, is involved in dendritic spine formation and synaptic plasticity in a specific RAC1-GAP activity. Limits the initiation of exploratory dendritic filopodia. Recruited to actin-patches that seed filopodia, binds specifically to plasma membrane sections that are deformed inward by acto-myosin mediated contractile forces. Acts through GAP activity on RAC1 to reduce actin polymerization necessary for filopodia formation. In association with SHANK3, promotes GRIA1 exocytosis from recycling endosomes and spine morphological changes associated to long-term potentiation. This is Rho GTPase-activating protein 44 from Homo sapiens (Human).